The following is a 289-amino-acid chain: Ribosomal protein L11 methyltransferase (289 aa).

Positions 142, 163, 185, and 226 each coordinate S-adenosyl-L-methionine.

Belongs to the methyltransferase superfamily. PrmA family.

The protein resides in the cytoplasm. It catalyses the reaction L-lysyl-[protein] + 3 S-adenosyl-L-methionine = N(6),N(6),N(6)-trimethyl-L-lysyl-[protein] + 3 S-adenosyl-L-homocysteine + 3 H(+). Its function is as follows. Methylates ribosomal protein L11. The polypeptide is Ribosomal protein L11 methyltransferase (Legionella pneumophila subsp. pneumophila (strain Philadelphia 1 / ATCC 33152 / DSM 7513)).